The sequence spans 484 residues: MSERIRVRYAPSPTGYLHIGNARTALFNYLFAKHYNGDFVVRIEDTDSKRNLEDGESSQFDNLKWLGLDWDESVDKDKGFGPYRQSERAEIYNPLIQQLLEEDKAYKCYMTEEELEAEREAQIARGEMPRYGGQHAHLTEEQRQQYEAEGRKPSIRFRVPKDQTYTFNDMVKGEISFESDNIGDWVIVKKDGVPTYNFAVAVDDHYMQISDVIRGDDHVSNTPKQLMIYEAFGWEAPRFGHMSLIVNEERKKLSKRDGQILQFIEQYRDLGYLPEALFNFITLLGWSPEGEEEIFSKEEFIKIFDEKRLSKSPAMFDRQKLAWVNNQYMKTKDTETVFELALPHLIKANLIPENPSEKDREWGRKLIALYQKEMSYAGEIVPLSEMFFHEMPELGKDEQEVLQGEQVPELMNHLYGKLESLESFEATEIKKMIKEVQKETGIKGKQLFMPIRVAVTGQMHGPELPNTIEVLGKDKVLSRLKNLV.

The 'HIGH' region motif lies at Pro-11 to Asn-21. The 'KMSKS' region signature appears at Lys-252–Arg-256. Lys-255 is a binding site for ATP.

This sequence belongs to the class-I aminoacyl-tRNA synthetase family. Glutamate--tRNA ligase type 1 subfamily. In terms of assembly, monomer.

It is found in the cytoplasm. It carries out the reaction tRNA(Glu) + L-glutamate + ATP = L-glutamyl-tRNA(Glu) + AMP + diphosphate. In terms of biological role, catalyzes the attachment of glutamate to tRNA(Glu) in a two-step reaction: glutamate is first activated by ATP to form Glu-AMP and then transferred to the acceptor end of tRNA(Glu). The sequence is that of Glutamate--tRNA ligase from Staphylococcus epidermidis (strain ATCC 35984 / DSM 28319 / BCRC 17069 / CCUG 31568 / BM 3577 / RP62A).